The chain runs to 509 residues: Protein Jade-1 (509 aa).

Residues 1–45 (MKRGRLPSSSEDSDDNGSLSTTWSQNSRSQHRRSSCSRPEDRKPS) are disordered. Positions 60 to 80 (DSYQLNPDEYYVLADPWRQEW) are interaction with KAT7/HBO1 and histones. Residues 80–188 (WEKGVQVPVS…EQRCYDNMNH (109 aa)) form an interaction with histones region. The residue at position 89 (Ser89) is a Phosphoserine. Thr92 is subject to Phosphothreonine. Lys114 participates in a covalent cross-link: Glycyl lysine isopeptide (Lys-Gly) (interchain with G-Cter in SUMO2). The segment at 203–253 (YVVCDVCQSPDGEDGNEMVFCDKCNICVHQACYGILKVPEGSWLCRTCALG) adopts a PHD-type 1 zinc-finger fold. The segment at 255-289 (QPKCLLCPKKGGAMKPTRSGTKWVHVSCALWIPEV) adopts a C2HC pre-PHD-type zinc-finger fold. A PHD-type 2 zinc finger spans residues 313–369 (LVCSLCNEKFGASIQCSVKNCRTAFHVTCAFDRGLEMKTILAENDEVKFKSYCPKHS). Positions 373–399 (KAEEGLGEGTAQENGAPECSPRDPLEP) are disordered.

This sequence belongs to the JADE family. In terms of assembly, component of the HBO1 complex composed at least of ING4 or ING5, KAT7/HBO1, MEAF6, and one of JADE1, JADE2 and JADE3. Interacts with NPHP4.

Its subcellular location is the nucleus. The protein resides in the chromosome. It is found in the cytoplasm. It localises to the cytoskeleton. The protein localises to the cilium basal body. Functionally, scaffold subunit of some HBO1 complexes, which have a histone H4 acetyltransferase activity. Plays a key role in HBO1 complex by directing KAT7/HBO1 specificity towards histone H4 acetylation (H4K5ac, H4K8ac and H4K12ac), regulating DNA replication initiation, regulating DNA replication initiation. May also promote acetylation of nucleosomal histone H4 by KAT5. Promotes apoptosis. May act as a renal tumor suppressor. Negatively regulates canonical Wnt signaling; at least in part, cooperates with NPHP4 in this function. The sequence is that of Protein Jade-1 (JADE1) from Bos taurus (Bovine).